Reading from the N-terminus, the 314-residue chain is Ribosomal protein L11 methyltransferase (314 aa).

4 residues coordinate S-adenosyl-L-methionine: T163, G184, D206, and N248.

The protein belongs to the methyltransferase superfamily. PrmA family.

The protein resides in the cytoplasm. It catalyses the reaction L-lysyl-[protein] + 3 S-adenosyl-L-methionine = N(6),N(6),N(6)-trimethyl-L-lysyl-[protein] + 3 S-adenosyl-L-homocysteine + 3 H(+). Functionally, methylates ribosomal protein L11. This is Ribosomal protein L11 methyltransferase from Lactobacillus acidophilus (strain ATCC 700396 / NCK56 / N2 / NCFM).